The following is a 194-amino-acid chain: Large ribosomal subunit protein eL15 (194 aa).

The segment at 162–194 is disordered; that stretch reads LTSAGRKSRGLRNKGKGAEKVRPSVRANKGKTK. The span at 167–176 shows a compositional bias: basic residues; the sequence is RKSRGLRNKG.

Belongs to the eukaryotic ribosomal protein eL15 family.

The sequence is that of Large ribosomal subunit protein eL15 from Thermococcus onnurineus (strain NA1).